The primary structure comprises 364 residues: Succinate--CoA ligase [ADP-forming] subunit beta (364 aa).

Residues 9–229 (KNIFKKYGIP…EFEEYKNKEK (221 aa)) enclose the ATP-grasp domain. Residues Lys43, 50-52 (GRG), Glu89, Leu92, and Glu97 each bind ATP. The Mg(2+) site is built by Asn189 and Asp203. Substrate is bound by residues Asn246 and 303 to 305 (GIT).

The protein belongs to the succinate/malate CoA ligase beta subunit family. In terms of assembly, heterotetramer of two alpha and two beta subunits. It depends on Mg(2+) as a cofactor.

The catalysed reaction is succinate + ATP + CoA = succinyl-CoA + ADP + phosphate. The enzyme catalyses GTP + succinate + CoA = succinyl-CoA + GDP + phosphate. The protein operates within carbohydrate metabolism; tricarboxylic acid cycle; succinate from succinyl-CoA (ligase route): step 1/1. In terms of biological role, succinyl-CoA synthetase functions in the citric acid cycle (TCA), coupling the hydrolysis of succinyl-CoA to the synthesis of either ATP or GTP and thus represents the only step of substrate-level phosphorylation in the TCA. The beta subunit provides nucleotide specificity of the enzyme and binds the substrate succinate, while the binding sites for coenzyme A and phosphate are found in the alpha subunit. The polypeptide is Succinate--CoA ligase [ADP-forming] subunit beta (Methanocaldococcus jannaschii (strain ATCC 43067 / DSM 2661 / JAL-1 / JCM 10045 / NBRC 100440) (Methanococcus jannaschii)).